Reading from the N-terminus, the 354-residue chain is Sphingosine-1-phosphate phosphatase 2 (354 aa).

4 helical membrane-spanning segments follow: residues Tyr-43–Phe-63, Leu-76–Trp-96, Tyr-115–Ser-135, and Tyr-140–Leu-160. Residues Lys-91–Pro-99 form a phosphatase sequence motif I region. The interval Pro-118–His-121 is phosphatase sequence motif II. His-121 (proton donor) is an active-site residue. A phosphatase sequence motif III region spans residues Ser-161 to Asp-172. Catalysis depends on His-168, which acts as the Nucleophile. A run of 5 helical transmembrane segments spans residues Ile-173–Leu-193, Pro-202–Ser-222, Ile-235–Val-255, Thr-273–Val-293, and Thr-334–Leu-354.

The protein belongs to the type 2 lipid phosphate phosphatase family. As to expression, highly expressed in pancreatic islets. Expressed in lung, small interstince, colon, kideny and brain.

The protein localises to the endoplasmic reticulum membrane. It carries out the reaction sphinganine 1-phosphate + H2O = sphinganine + phosphate. It catalyses the reaction sphing-4-enine 1-phosphate + H2O = sphing-4-enine + phosphate. The catalysed reaction is (4R)-hydroxysphinganine 1-phosphate + H2O = (4R)-hydroxysphinganine + phosphate. Its function is as follows. Has specific phosphohydrolase activity towards sphingoid base 1-phosphates. Has high phosphohydrolase activity against dihydrosphingosine-1-phosphate and sphingosine-1-phosphate (S1P) in vitro. Sphingosine-1-phosphate phosphatase activity is needed for efficient recycling of sphingosine into the sphingolipid synthesis pathway. May play a role in attenuating intracellular sphingosine 1-phosphate (S1P) signaling. May play a role in pro-inflammatory signaling. Plays a role in the regulation of pancreatic islet beta-cell endoplasmic reticulum stress and proliferation. This is Sphingosine-1-phosphate phosphatase 2 from Mus musculus (Mouse).